Reading from the N-terminus, the 261-residue chain is DNA oxidative demethylase ALKBH2 (261 aa).

Residues 1-57 form a disordered region; that stretch reads MDRFLVKGAQGGLLRKQEEQEPTGEEPAVLGGDKESTRKRPRREAPGNGGHSAGPSW. The PCNA-binding signature appears at 3-7; sequence RFLVK. Residues 102–104 and 122–124 each bind substrate; these read FGK and YTF. The Fe2OG dioxygenase domain maps to 152 to 257; it reads TFNFVLINRY…RVNLTFRKIL (106 aa). Residues Asn159, Tyr161, and His171 each contribute to the 2-oxoglutarate site. His171 and Asp173 together coordinate Fe cation. Asp174 is a substrate binding site. The 2-oxoglutarate site is built by His236, Arg248, Thr252, and Arg254. His236 provides a ligand contact to Fe cation.

The protein belongs to the alkB family. As to quaternary structure, interacts with PCNA homotrimer; this interaction is enhanced during the S-phase of the cell cycle. Interacts with nucleolar proteins NCL, UBTF and NPM1. Interacts with XRCC5-XRCC6 heterodimer. The cofactor is Fe(2+). Detected in colon, small intestine, ovary, testis, prostate, skeletal muscle, heart, liver and urinary bladder.

The protein resides in the nucleus. It is found in the nucleolus. The protein localises to the nucleoplasm. The catalysed reaction is a methylated nucleobase within DNA + 2-oxoglutarate + O2 = a nucleobase within DNA + formaldehyde + succinate + CO2. It carries out the reaction an N(1)-methyl-2'-deoxyadenosine in double-stranded DNA + 2-oxoglutarate + O2 = a 2'-deoxyadenosine in double-stranded DNA + formaldehyde + succinate + CO2 + H(+). It catalyses the reaction an N(1)-methyl-2'-deoxyadenosine in single-stranded DNA + 2-oxoglutarate + O2 = a 2'-deoxyadenosine in single-stranded DNA + formaldehyde + succinate + CO2 + H(+). The enzyme catalyses an N(3)-methyl-2'-deoxycytidine in double-stranded DNA + 2-oxoglutarate + O2 = a 2'-deoxycytidine in double-stranded DNA + formaldehyde + succinate + CO2 + H(+). The catalysed reaction is an N(3)-methyl-2'-deoxycytidine in single-stranded DNA + 2-oxoglutarate + O2 = a 2'-deoxycytidine in single-stranded DNA + formaldehyde + succinate + CO2 + H(+). It carries out the reaction a 1,N(6)-etheno-2'-deoxyadenosine in double-stranded DNA + 2-oxoglutarate + O2 + H2O = a 2'-deoxyadenosine in double-stranded DNA + glyoxal + succinate + CO2. It catalyses the reaction a 1,N(6)-etheno-2'-deoxyadenosine in single-stranded DNA + 2-oxoglutarate + O2 + H2O = a 2'-deoxyadenosine in single-stranded DNA + glyoxal + succinate + CO2. The enzyme catalyses a 3,N(4)-etheno-2'-deoxycytidine in double-stranded DNA + 2-oxoglutarate + O2 + H2O = a 2'-deoxycytidine in double-stranded DNA + glyoxal + succinate + CO2. The catalysed reaction is a 3,N(4)-etheno-2'-deoxycytidine in single-stranded DNA + 2-oxoglutarate + O2 + H2O = a 2'-deoxycytidine in single-stranded DNA + glyoxal + succinate + CO2. It carries out the reaction a 1,N(2)-etheno-2'-deoxyguanosine in double-stranded DNA + 2-oxoglutarate + O2 + H2O = a 2'-deoxyguanosine in double-stranded DNA + glyoxal + succinate + CO2. With respect to regulation, activated by ascorbate and magnesium ions. Functionally, dioxygenase that repairs alkylated nucleic acid bases by direct reversal oxidative dealkylation. Can process both double-stranded (ds) and single-stranded (ss) DNA substrates, with a strong preference for dsDNA. Uses molecular oxygen, 2-oxoglutarate and iron as cofactors to oxidize the alkyl groups that are subsequently released as aldehydes, regenerating the undamaged bases. Probes the base pair stability, locates a weakened base pair and flips the damaged base to accommodate the lesion in its active site for efficient catalysis. Repairs monoalkylated bases, specifically N1-methyladenine and N3-methylcytosine, as well as higher order alkyl adducts such as bases modified with exocyclic bridged adducts known as etheno adducts including 1,N6-ethenoadenine, 3,N4-ethenocytosine and 1,N2-ethenoguanine. Acts as a gatekeeper of genomic integrity under alkylation stress. Efficiently repairs alkylated lesions in ribosomal DNA (rDNA). These lesions can cause ss- and dsDNA strand breaks that severely impair rDNA transcription. In a response mechanism to DNA damage, associates with PCNA at replication forks to repair alkylated adducts prior to replication. The sequence is that of DNA oxidative demethylase ALKBH2 (ALKBH2) from Homo sapiens (Human).